Here is a 596-residue protein sequence, read N- to C-terminus: Lamin-B2 (596 aa).

The interval 1–20 is disordered; that stretch reads MASLPPHAGPATPLSPTRLS. The tract at residues 1–26 is head; it reads MASLPPHAGPATPLSPTRLSRLQEKE. T12 is subject to Phosphothreonine. At S15 the chain carries Phosphoserine. In terms of domain architecture, IF rod spans 24 to 380; that stretch reads EKEELRELND…KLLEGEEERL (357 aa). The coil 1A stretch occupies residues 27 to 61; the sequence is ELRELNDRLAHYIDRVRALELENDRLLLRISEKEE. At K59 the chain carries N6-acetyllysine; alternate. K59 participates in a covalent cross-link: Glycyl lysine isopeptide (Lys-Gly) (interchain with G-Cter in SUMO2); alternate. The segment at 62–73 is linker 1; it reads VTTREVSGIKTL. The coil 1B stretch occupies residues 74–207; the sequence is YESELADARR…AFSKSVFEEE (134 aa). Residues K173 and K233 each participate in a glycyl lysine isopeptide (Lys-Gly) (interchain with G-Cter in SUMO2) cross-link. A linker 2 region spans residues 208–234; the sequence is VRETRRRHERRLVEVDSSRQQEYDFKM. The segment at 235-378 is coil 2; it reads AQALEDLRSQ…YRKLLEGEEE (144 aa). 2 positions are modified to phosphoserine: S294 and S385. Residues 376–440 are disordered; that stretch reads EEERLKLSPS…ASRVSSGSRL (65 aa). Positions 379-596 are tail; it reads RLKLSPSPSS…RTTSRGCRLM (218 aa). Residues 382-403 show a composition bias toward low complexity; it reads LSPSPSSRITISRATSSSSSSS. The O-linked (GlcNAc) threonine glycan is linked to T391. 3 positions are modified to phosphoserine: S398, S400, and S402. Omega-N-methylarginine is present on R413. The Nuclear localization signal motif lies at 415–420; that stretch reads KRRRLE. The segment covering 425–439 has biased composition (low complexity); the sequence is SGSPSRASRVSSGSR. The LTD domain maps to 438-559; sequence SRLAQQTVAT…VKAAKHSSVQ (122 aa). Residue K465 forms a Glycyl lysine isopeptide (Lys-Gly) (interchain with G-Cter in SUMO2) linkage. Residue S473 is modified to Phosphoserine. Residues 552–596 are disordered; sequence AAKHSSVQGRENGEEEEEEEAEFGEEDLFHQQGDPRTTSRGCRLM. Acidic residues predominate over residues 564 to 577; it reads GEEEEEEEAEFGEE. A compositionally biased stretch (polar residues) spans 585-596; sequence DPRTTSRGCRLM. C593 is modified (cysteine methyl ester). C593 carries the S-farnesyl cysteine lipid modification. Positions 594–596 are cleaved as a propeptide — removed in mature form; sequence RLM.

It belongs to the intermediate filament family. Dimer. Lamin dimers then assemble into dimeric head-to-tail polymers. Ultimately, two head-to-tail polymers assemble laterally into a protofilament with a uniformly shaped rod of 3.5 nm in diameter. Interacts with TMEM43. In terms of processing, B-type lamins undergo a series of modifications, such as farnesylation and phosphorylation. Increased phosphorylation of the lamins occurs before envelope disintegration and probably plays a role in regulating lamin associations. Phosphorylation plays a key role in lamin organization, subcellular localization and nuclear envelope disintegration. Phosphorylation by CDK1 at Ser-15 and Ser-385 at the onset of mitosis drives lamin disassembly and nuclear envelope breakdown. As to expression, germ cell-specific.

Its subcellular location is the nucleus lamina. Functionally, lamins are intermediate filament proteins that assemble into a filamentous meshwork, and which constitute the major components of the nuclear lamina, a fibrous layer on the nucleoplasmic side of the inner nuclear membrane. Lamins provide a framework for the nuclear envelope, bridging the nuclear envelope and chromatin, thereby playing an important role in nuclear assembly, chromatin organization, nuclear membrane and telomere dynamics. The structural integrity of the lamina is strictly controlled by the cell cycle, as seen by the disintegration and formation of the nuclear envelope in prophase and telophase, respectively. The polypeptide is Lamin-B2 (Lmnb2) (Mus musculus (Mouse)).